A 600-amino-acid chain; its full sequence is NADPH-dependent diflavin oxidoreductase 1 (600 aa).

Residues 6–150 (LLILYGSQTG…VVDPWLKDLW (145 aa)) enclose the Flavodoxin-like domain. FMN contacts are provided by residues 12–17 (SQTGTA), 59–62 (ATTG), 97–106 (LGDSSYPKFN), and D132. Residues 210–449 (IHPFLAPVLS…WVKKGSMKFP (240 aa)) enclose the FAD-binding FR-type domain. FAD-binding positions include R354, 386 to 389 (RAFS), and 420 to 423 (GLCS). Residues T463, 518 to 519 (SR), and 524 to 528 (KIYVQ) each bind NADP(+). W599 is an FAD binding site.

The protein belongs to the NADPH-dependent diflavin oxidoreductase NDOR1 family. In the N-terminal section; belongs to the flavodoxin family. It in the C-terminal section; belongs to the flavoprotein pyridine nucleotide cytochrome reductase family. In terms of assembly, interacts with ciapin1; as part of the cytosolic iron-sulfur (Fe-S) protein assembly (CIA) machinery. Requires FAD as cofactor. FMN serves as cofactor.

The protein resides in the cytoplasm. It is found in the perinuclear region. The catalysed reaction is 2 oxidized [2Fe-2S]-[protein] + NADPH = 2 reduced [2Fe-2S]-[protein] + NADP(+) + H(+). In terms of biological role, NADPH-dependent reductase which is a central component of the cytosolic iron-sulfur (Fe-S) protein assembly (CIA) machinery. Transfers electrons from NADPH via its FAD and FMN prosthetic groups to the [2Fe-2S] cluster of ciapin1, another key component of the CIA machinery. In turn, this reduced cluster provides electrons for assembly of cytosolic iron-sulfur cluster proteins. It can also reduce the [2Fe-2S] cluster of cisd1 and activate this protein implicated in Fe/S cluster repair. This chain is NADPH-dependent diflavin oxidoreductase 1, found in Xenopus laevis (African clawed frog).